Here is a 181-residue protein sequence, read N- to C-terminus: Large ribosomal subunit protein uL5 (181 aa).

Belongs to the universal ribosomal protein uL5 family. As to quaternary structure, part of the 50S ribosomal subunit; part of the 5S rRNA/L5/L18/L25 subcomplex. Contacts the 5S rRNA and the P site tRNA. Forms a bridge to the 30S subunit in the 70S ribosome.

In terms of biological role, this is one of the proteins that bind and probably mediate the attachment of the 5S RNA into the large ribosomal subunit, where it forms part of the central protuberance. In the 70S ribosome it contacts protein S13 of the 30S subunit (bridge B1b), connecting the 2 subunits; this bridge is implicated in subunit movement. Contacts the P site tRNA; the 5S rRNA and some of its associated proteins might help stabilize positioning of ribosome-bound tRNAs. This Sulfurimonas denitrificans (strain ATCC 33889 / DSM 1251) (Thiomicrospira denitrificans (strain ATCC 33889 / DSM 1251)) protein is Large ribosomal subunit protein uL5.